Here is a 295-residue protein sequence, read N- to C-terminus: Small ribosomal subunit protein uS2 (295 aa).

A disordered region spans residues 232 to 295; it reads RRRGTDEKPE…DEQPAAAAAE (64 aa). The span at 252–287 shows a compositional bias: basic and acidic residues; sequence EWERELLEEPKKSDEQPAKSDELPVKTDEQPTKSDE.

It belongs to the universal ribosomal protein uS2 family.

The polypeptide is Small ribosomal subunit protein uS2 (Salinispora tropica (strain ATCC BAA-916 / DSM 44818 / JCM 13857 / NBRC 105044 / CNB-440)).